We begin with the raw amino-acid sequence, 136 residues long: Small nuclear ribonucleoprotein Sm D3 (136 aa).

A Sm domain is found at 6–78 (VPIKILHEAE…IRFMILPDML (73 aa)). The interval 98-136 (GLGGLDQRGRGRGTAFRRPMGRGGPRGMSRPGGAPTFRG) is disordered.

The protein belongs to the snRNP core protein family.

The protein localises to the nucleus. Its subcellular location is the cytoplasm. The protein resides in the cytosol. In terms of biological role, plays a role in pre-mRNA splicing as a core component of the spliceosomal U1, U2, U4 and U5 small nuclear ribonucleoproteins (snRNPs), the building blocks of the spliceosome. The chain is Small nuclear ribonucleoprotein Sm D3 (snr-1) from Caenorhabditis elegans.